Consider the following 321-residue polypeptide: Methionyl-tRNA formyltransferase (321 aa).

Residue 112 to 115 (SILP) coordinates (6S)-5,6,7,8-tetrahydrofolate.

This sequence belongs to the Fmt family.

The enzyme catalyses L-methionyl-tRNA(fMet) + (6R)-10-formyltetrahydrofolate = N-formyl-L-methionyl-tRNA(fMet) + (6S)-5,6,7,8-tetrahydrofolate + H(+). In terms of biological role, attaches a formyl group to the free amino group of methionyl-tRNA(fMet). The formyl group appears to play a dual role in the initiator identity of N-formylmethionyl-tRNA by promoting its recognition by IF2 and preventing the misappropriation of this tRNA by the elongation apparatus. The polypeptide is Methionyl-tRNA formyltransferase (Shewanella piezotolerans (strain WP3 / JCM 13877)).